Consider the following 474-residue polypeptide: MPPNAKSETDAKPEAEPAPASEPAADLESVDQKLEETHHSKFREVDRQEQEVLAEKAAEAASQRIAQVESTTRSATTEAQESTTTAVPVIKKIEHVGEVVTEVIAERTGLPTWGVVAIIILVFLVVFGIIFFCVRRFLKKRRTKDGKGKKGVDMKSVQLLGSAYKEKVQPDMEELTENAEEGDEEDKQSEQKLGRLNFKLEYDFNSNSLAVTVIQAEELPALDMGGTSDPYVKVYLLPDKKKKFETKVHRKTLSPVFNETFTFKSLPYADAMNKTLVFAIFDFDRFSKHDQIGEVKVPLCTIDLAQTIEEWRDLVSVEGEGGQEKLGDICFSLRYVPTAGKLTVVILEAKNLKKMDVGGLSDPYVKIAIMQNGKRLKKKKTSIKKCTLNPYYNESFSFEVPFEQIQKICLVVTVVDYDRIGTSEPIGRCILGCMGTGTELRHWSDMLASPRRPIAQWHTLKDPEETDEILKNMK.

2 disordered regions span residues 1-49 and 63-84; these read MPPN…DRQE and QRIAQVESTTRSATTEAQESTT. Residues 1–107 are Vesicular-facing; the sequence is MPPNAKSETD…EVVTEVIAER (107 aa). Positions 30–49 are enriched in basic and acidic residues; sequence VDQKLEETHHSKFREVDRQE. Residues 69–84 show a composition bias toward low complexity; that stretch reads ESTTRSATTEAQESTT. Residues 108 to 134 traverse the membrane as a helical segment; it reads TGLPTWGVVAIIILVFLVVFGIIFFCV. The Cytoplasmic portion of the chain corresponds to 135–474; it reads RRFLKKRRTK…ETDEILKNMK (340 aa). The interval 170–189 is disordered; the sequence is PDMEELTENAEEGDEEDKQS. Residues 171-187 show a composition bias toward acidic residues; that stretch reads DMEELTENAEEGDEEDK. A phospholipid binding region spans residues 186–434; that stretch reads DKQSEQKLGR…PIGRCILGCM (249 aa). C2 domains follow at residues 192–312 and 325–458; these read KLGR…EEWR and KLGD…AQWH. 13 residues coordinate Ca(2+): Leu222, Asp223, Asp229, Asp282, Phe283, Asp284, Ser287, Lys288, Asp290, Asp356, Asp362, Asp416, and Asp418.

It belongs to the synaptotagmin family. Homodimer or homotrimer (Potential). Identified in a complex with Syn and nwk. Interacts with StnA and StnB via its second C2 domain. This interaction may mediate its retrieval from the plasma membrane, thereby facilitating the internalization of multiple synaptic vesicles from the plasma membrane. It depends on Ca(2+) as a cofactor.

Its subcellular location is the cytoplasmic vesicle. It localises to the secretory vesicle. It is found in the synaptic vesicle membrane. The protein localises to the synapse. Functionally, may have a regulatory role in the membrane interactions during trafficking of synaptic vesicles at the active zone of the synapse. It binds acidic phospholipids with a specificity that requires the presence of both an acidic head group and a diacyl backbone. In Drosophila melanogaster (Fruit fly), this protein is Synaptotagmin 1 (Syt1).